The sequence spans 166 residues: Cyclin-dependent kinase 4 inhibitor D (166 aa).

At Met-1 the chain carries N-acetylmethionine. ANK repeat units lie at residues 41–69 (FGKTALQVMMFGSPTIALELLKQGASPNV), 73–102 (SGTTPAHDAARTGFLDTLKVLVEHGADVNA), 106–135 (TGALPIHLAVREGHTSVVSFLATESDLHHR), and 138–166 (TGLTPLELARGRGAQELMDILQRHTVAPL).

Belongs to the CDKN2 cyclin-dependent kinase inhibitor family. As to quaternary structure, interacts with CDK6.

It is found in the nucleus. It localises to the cytoplasm. Functionally, interacts strongly with CDK4 and CDK6 and inhibits them. In Bos taurus (Bovine), this protein is Cyclin-dependent kinase 4 inhibitor D (CDKN2D).